The primary structure comprises 410 residues: Mating-type locus allele B4 protein (410 aa).

The segment at 1 to 110 (MSSDPKISIT…ANASSPVVGC (110 aa)) is variable domain between B alleles. The homeobox; TALE-type DNA-binding region spans 107–184 (VVGCRELSED…NARRRSGWSH (78 aa)). A highly conserved between B alleles region spans residues 111–410 (RELSEDLPAY…PFLCLSVAFV (300 aa)). 3 disordered regions span residues 202-241 (RAKL…TPAD), 278-335 (TPKP…TPEL), and 375-394 (RGNR…QPDE). Low complexity predominate over residues 206 to 222 (SSSNQSTPPSPTSEYPS). The short motif at 276-308 (KKTPKPGMPRPVTTVAKRQPARKTKPAAKPKSR) is the Nuclear localization signal element. Positions 294–307 (QPARKTKPAAKPKS) are enriched in basic residues. The segment covering 312-335 (PRASTTPSIDSTLDSSKLESTPEL) has biased composition (polar residues). The tract at residues 333–410 (PELSMCSTAD…PFLCLSVAFV (78 aa)) is not essential for B4 function. Residues 375-388 (RGNRKVKALPKRAG) show a composition bias toward basic residues.

This sequence belongs to the TALE/M-ATYP homeobox family.

Its subcellular location is the nucleus. Functionally, the B locus has at least 25 alleles, and any combination of two different B alleles yields a multimeric regulatory protein, that activates genes responsible for the pathogenicity and for the sexual development of the fungus within the corn plant. The protein is Mating-type locus allele B4 protein of Mycosarcoma maydis (Corn smut fungus).